A 156-amino-acid chain; its full sequence is D-aminoacyl-tRNA deacylase (156 aa).

A Gly-cisPro motif, important for rejection of L-amino acids motif is present at residues Gly-142–Pro-143.

Belongs to the DTD family. As to quaternary structure, homodimer.

The protein resides in the cytoplasm. The catalysed reaction is glycyl-tRNA(Ala) + H2O = tRNA(Ala) + glycine + H(+). It carries out the reaction a D-aminoacyl-tRNA + H2O = a tRNA + a D-alpha-amino acid + H(+). An aminoacyl-tRNA editing enzyme that deacylates mischarged D-aminoacyl-tRNAs. Also deacylates mischarged glycyl-tRNA(Ala), protecting cells against glycine mischarging by AlaRS. Acts via tRNA-based rather than protein-based catalysis; rejects L-amino acids rather than detecting D-amino acids in the active site. By recycling D-aminoacyl-tRNA to D-amino acids and free tRNA molecules, this enzyme counteracts the toxicity associated with the formation of D-aminoacyl-tRNA entities in vivo and helps enforce protein L-homochirality. This Cupriavidus pinatubonensis (strain JMP 134 / LMG 1197) (Cupriavidus necator (strain JMP 134)) protein is D-aminoacyl-tRNA deacylase.